The sequence spans 737 residues: Cilium assembly protein DZIP1L (737 aa).

The tract at residues 1-293 is interaction with Rab8; the sequence is MGFKGKYPQM…LKQSNEQFIQ (293 aa). Residues 98–132 adopt a coiled-coil conformation; that stretch reads VTDLKEAHTTAQEEIATLRKSLSESNNEVVQLHKR. A C2H2-type zinc finger spans residues 144 to 167; that stretch reads YPCHLCTKNFISNEALNVHIGRKH. 5 disordered regions span residues 167-187, 214-267, 415-548, 624-682, and 698-737; these read HRVA…DRDK, ERNI…KEQL, SEFL…RKDA, KSPL…VSRD, and IRGA…DNLK. Basic and acidic residues-rich tracts occupy residues 244 to 266 and 415 to 438; these read EPKE…RKEQ and SEFL…KGSE. The span at 457 to 469 shows a compositional bias: polar residues; the sequence is SAGSSDSNPTYTK. Positions 492–510 are enriched in acidic residues; it reads SQEETENEEERSLTEEEGT. The segment covering 665–677 has biased composition (polar residues); that stretch reads SSEQQTRSPSPQR. Residues 724 to 737 show a composition bias toward basic and acidic residues; that stretch reads EDGKSFNDSDDNLK.

It belongs to the DZIP C2H2-type zinc-finger protein family. In terms of assembly, component of a ciliary transition zone (TZ)-localized complex composed of DZIP1, Fam92 and Cby. Interacts directly with Cby. Interacts with Cep290 (via N-terminus). Interacts (via N-terminus) with Rab8. As to expression, in neurons of the second and third antennal segments, expressed at the tip of the dendrites.

Its subcellular location is the cytoplasm. It is found in the cytoskeleton. The protein localises to the microtubule organizing center. It localises to the centrosome. The protein resides in the centriole. Its subcellular location is the cilium basal body. Functionally, component of the DZIP1-Fam92-Cby complex which promotes ciliogenesis in sensory neurons and spermatocytes by acting downstream of Cep290 to initiate early ciliary membrane formation and thus transition zone (TZ) assembly. During spermatogenesis, also regulates distal elongation of the basal-body and their docking (anchoring) to the plasma membrane and as a consequence, regulates the initiation and proper elongation of axonemal microtubules. Within the complex, required to recruit or stabilize Rab8, Fam92 and Cby at the distal basal body of cilia to promote early ciliary membrane formation and initiate TZ assembly. Also acts with Fam92 to restrict Cep290 localization to the proximal part of the TZ. May also be involved in recruitment or stabilization of Mks1 at the TZ. The protein is Cilium assembly protein DZIP1L of Drosophila melanogaster (Fruit fly).